The following is a 433-amino-acid chain: 26S proteasome regulatory subunit 7 (433 aa).

The disordered stretch occupies residues 1–22; sequence MPDYLGADQRKTKEDEKDDKPI. Basic and acidic residues predominate over residues 8 to 22; that stretch reads DQRKTKEDEKDDKPI. Residue lysine 116 is modified to N6-acetyllysine. 216–223 provides a ligand contact to ATP; it reads GPPGTGKT. Lysine 422 is subject to N6-acetyllysine.

It belongs to the AAA ATPase family. Component of the 19S proteasome regulatory particle complex. The 26S proteasome consists of a 20S core particle (CP) and two 19S regulatory subunits (RP). The regulatory particle is made of a lid composed of 9 subunits, a base containing 6 ATPases including PSMC2 and few additional components. Interacts with NDC80/HEC; this interaction is detected only during M phase. Interacts and SQSTM1. Interacts with PAAF1. Directly interacts with TRIM5. In terms of processing, monoubiquitinated by RNF181. Post-translationally, phosphorylated. Dephosphorylated by UBLCP1 which impairs PSMC2 ATPase activity and disrupts 26S proteasome assembly.

The protein resides in the cytoplasm. The protein localises to the nucleus. Functionally, component of the 26S proteasome, a multiprotein complex involved in the ATP-dependent degradation of ubiquitinated proteins. This complex plays a key role in the maintenance of protein homeostasis by removing misfolded or damaged proteins, which could impair cellular functions, and by removing proteins whose functions are no longer required. Therefore, the proteasome participates in numerous cellular processes, including cell cycle progression, apoptosis, or DNA damage repair. PSMC2 belongs to the heterohexameric ring of AAA (ATPases associated with diverse cellular activities) proteins that unfolds ubiquitinated target proteins that are concurrently translocated into a proteolytic chamber and degraded into peptides. The sequence is that of 26S proteasome regulatory subunit 7 (PSMC2) from Pongo abelii (Sumatran orangutan).